The sequence spans 533 residues: Beta-glucosidase 24 (533 aa).

A signal peptide spans 1–26 (MVLQKLPLMSIGLLWLLIIVGPLVNA). Q58 lines the a beta-D-glucoside pocket. N-linked (GlcNAc...) asparagine glycans are attached at residues N64 and N88. A beta-D-glucoside contacts are provided by residues H161 and 206–207 (NE). The active-site Proton donor is E207. A disulfide bridge links C226 with C239. Y355 is an a beta-D-glucoside binding site. N-linked (GlcNAc...) asparagine glycosylation is present at N388. Residue E427 participates in a beta-D-glucoside binding. The active-site Nucleophile is the E427. N-linked (GlcNAc...) asparagine glycosylation is found at N437, N442, and N470. Residues W477, 484 to 485 (EW), and F493 each bind a beta-D-glucoside. N503 carries N-linked (GlcNAc...) asparagine glycosylation. Positions 530 to 533 (KDEL) match the Prevents secretion from ER motif.

This sequence belongs to the glycosyl hydrolase 1 family.

Its subcellular location is the endoplasmic reticulum lumen. It catalyses the reaction Hydrolysis of terminal, non-reducing beta-D-glucosyl residues with release of beta-D-glucose.. The sequence is that of Beta-glucosidase 24 from Arabidopsis thaliana (Mouse-ear cress).